We begin with the raw amino-acid sequence, 239 residues long: MIINAKGPASFAEKYIVRSIWEDKFPPGSILPAERELSELIGVTRTTLREVLQRLARDGWLTIQHGKPTRVNNFWETSGLNILETIAELNPDGFPELVDQLLSARSSVSAIYFRGAIRNNPEEAIEALSHLSELEDTAQAYAEFDYQLQHTLAFSSGNPLYVLILNGFKGLYSRVGRYYFSSAEARALAMDFYKQLQQLAIDKNYTDVPALMRTYGINSGVMWQSLRDDMPVDLGYSDN.

Residues 6–74 (KGPASFAEKY…HGKPTRVNNF (69 aa)) form the HTH gntR-type domain. Positions 34–53 (ERELSELIGVTRTTLREVLQ) form a DNA-binding region, H-T-H motif.

In terms of assembly, homodimer.

It localises to the cytoplasm. Multifunctional regulator of fatty acid metabolism. This chain is Fatty acid metabolism regulator protein, found in Shewanella pealeana (strain ATCC 700345 / ANG-SQ1).